Here is a 470-residue protein sequence, read N- to C-terminus: Probable citrate synthase, mitochondrial (470 aa).

Active-site residues include His297, His351, and Asp406.

Belongs to the citrate synthase family. In terms of assembly, homodimer.

The protein localises to the mitochondrion matrix. It carries out the reaction oxaloacetate + acetyl-CoA + H2O = citrate + CoA + H(+). It functions in the pathway carbohydrate metabolism; tricarboxylic acid cycle; isocitrate from oxaloacetate: step 1/2. This Leishmania infantum protein is Probable citrate synthase, mitochondrial.